The sequence spans 314 residues: UPF0761 membrane protein VP0125 (314 aa).

6 consecutive transmembrane segments (helical) span residues 41–61, 104–124, 139–159, 185–205, 217–237, and 249–269; these read YLAY…LSIL, MSAV…SNID, LVFS…LVGA, FLRW…YILV, VGAA…ALYI, and ALAA…IVLL. Residues 295–314 are disordered; it reads ESQLANEGSESSDSANSTSQ.

Belongs to the UPF0761 family.

Its subcellular location is the cell inner membrane. This Vibrio parahaemolyticus serotype O3:K6 (strain RIMD 2210633) protein is UPF0761 membrane protein VP0125.